The sequence spans 350 residues: Protein RecA (350 aa).

67 to 74 (GPESSGKT) contacts ATP.

The protein belongs to the RecA family.

It localises to the cytoplasm. In terms of biological role, can catalyze the hydrolysis of ATP in the presence of single-stranded DNA, the ATP-dependent uptake of single-stranded DNA by duplex DNA, and the ATP-dependent hybridization of homologous single-stranded DNAs. It interacts with LexA causing its activation and leading to its autocatalytic cleavage. The sequence is that of Protein RecA from Mycobacterium avium (strain 104).